The sequence spans 403 residues: Lissencephaly-1 homolog 1 (403 aa).

The 32-residue stretch at 7-38 folds into the LisH domain; the sequence is QRDELNQAIHQYLLISYQQSAQLFKTEAAVKD. Residues 51-87 are a coiled coil; sequence NSIVRLSKRVITLEQQVEQLNEQLAQAQAGKIQFNKS. 7 WD repeats span residues 103–142, 145–184, 187–226, 229–270, 271–327, 330–369, and 373–403; these read GHRA…FEKT, GHTS…CVKT, GHEH…CKKT, EHQE…HQLS, GHEH…NLFT, GHDN…QKKK, and AHDK…WLLS.

It belongs to the WD repeat LIS1/nudF family.

It is found in the cytoplasm. Its subcellular location is the cytoskeleton. The protein resides in the microtubule organizing center. It localises to the centrosome. Positively regulates the activity of the minus-end directed microtubule motor protein dynein. May enhance dynein-mediated microtubule sliding by targeting dynein to the microtubule plus end. Required for several dynein- and microtubule-dependent processes. The chain is Lissencephaly-1 homolog 1 from Paramecium tetraurelia.